Reading from the N-terminus, the 377-residue chain is Pseudouridylate synthase RPUSD4, mitochondrial (377 aa).

Residues 1-46 (MAAPCLRTPGVQLLSMSSRPGRLFTPGSWSFCSSATSSRPLNAQRL) constitute a mitochondrion transit peptide. D153 is a catalytic residue.

It belongs to the pseudouridine synthase RluA family. Interacts with 16S mt-rRNA, mt-tRNA(Phe) and mt-tRNA(Met). Forms a regulatory protein-RNA complex, consisting of RCC1L, NGRN, RPUSD3, RPUSD4, TRUB2, FASTKD2 and 16S mt-rRNA.

Its subcellular location is the mitochondrion matrix. The protein resides in the nucleus. The protein localises to the cytoplasm. The catalysed reaction is uridine in 5S rRNA = pseudouridine in 5S rRNA. It catalyses the reaction a uridine in tRNA = a pseudouridine in tRNA. It carries out the reaction a uridine in mRNA = a pseudouridine in mRNA. In terms of biological role, catalyzes uridine to pseudouridine isomerization (pseudouridylation) of different mitochondrial RNA substrates. Acts on position 1397 in 16S mitochondrial ribosomal RNA (16S mt-rRNA). This modification is required for the assembly of 16S mt-rRNA into a functional mitochondrial ribosome. As a component of a functional protein-RNA module, consisting of RCC1L, NGRN, RPUSD3, RPUSD4, TRUB2, FASTKD2 and 16S mt-rRNA, controls 16S mt-rRNA abundance and is required for intra-mitochondrial translation. Acts on position 39 in mitochondrial tRNA(Phe). Also catalyzes pseudouridylation of mRNAs in nucleus: acts as a regulator of pre-mRNA splicing by mediating pseudouridylation of pre-mRNAs at locations associated with alternatively spliced regions. Pseudouridylation of pre-mRNAs near splice sites directly regulates mRNA splicing and mRNA 3'-end processing. This Mus musculus (Mouse) protein is Pseudouridylate synthase RPUSD4, mitochondrial.